We begin with the raw amino-acid sequence, 122 residues long: Small ribosomal subunit protein uS13 (122 aa).

The segment at 93 to 122 (RRGLPVRGQKTKTNARTRKGPKKTIANKKK) is disordered.

This sequence belongs to the universal ribosomal protein uS13 family. In terms of assembly, part of the 30S ribosomal subunit. Forms a loose heterodimer with protein S19. Forms two bridges to the 50S subunit in the 70S ribosome.

Located at the top of the head of the 30S subunit, it contacts several helices of the 16S rRNA. In the 70S ribosome it contacts the 23S rRNA (bridge B1a) and protein L5 of the 50S subunit (bridge B1b), connecting the 2 subunits; these bridges are implicated in subunit movement. Contacts the tRNAs in the A and P-sites. In Clostridium beijerinckii (strain ATCC 51743 / NCIMB 8052) (Clostridium acetobutylicum), this protein is Small ribosomal subunit protein uS13.